The chain runs to 119 residues: Small ribosomal subunit protein bS16 (119 aa).

This sequence belongs to the bacterial ribosomal protein bS16 family.

The protein is Small ribosomal subunit protein bS16 of Chlamydia felis (strain Fe/C-56) (Chlamydophila felis).